The sequence spans 1400 residues: DNA-directed RNA polymerase subunit beta' (1400 aa).

Zn(2+) contacts are provided by cysteine 70, cysteine 72, cysteine 85, and cysteine 88. Mg(2+) contacts are provided by aspartate 460, aspartate 462, and aspartate 464. Residues cysteine 814, cysteine 887, cysteine 894, and cysteine 897 each coordinate Zn(2+).

This sequence belongs to the RNA polymerase beta' chain family. In terms of assembly, the RNAP catalytic core consists of 2 alpha, 1 beta, 1 beta' and 1 omega subunit. When a sigma factor is associated with the core the holoenzyme is formed, which can initiate transcription. Requires Mg(2+) as cofactor. Zn(2+) is required as a cofactor.

It carries out the reaction RNA(n) + a ribonucleoside 5'-triphosphate = RNA(n+1) + diphosphate. In terms of biological role, DNA-dependent RNA polymerase catalyzes the transcription of DNA into RNA using the four ribonucleoside triphosphates as substrates. This chain is DNA-directed RNA polymerase subunit beta', found in Marinomonas sp. (strain MWYL1).